Consider the following 473-residue polypeptide: Siroheme synthase 2 (473 aa).

Residues 1-204 (MDYFPIFCQL…NDHVQADQHV (204 aa)) are precorrin-2 dehydrogenase /sirohydrochlorin ferrochelatase. NAD(+) contacts are provided by residues 22–23 (EI) and 43–44 (CE). A Phosphoserine modification is found at Ser-128. The tract at residues 216–473 (GEVVLVGAGP…KVTECVAHVG (258 aa)) is uroporphyrinogen-III C-methyltransferase. Pro-225 serves as a coordination point for S-adenosyl-L-methionine. Asp-248 serves as the catalytic Proton acceptor. The Proton donor role is filled by Lys-270. S-adenosyl-L-methionine contacts are provided by residues 301–303 (GGD), Ile-306, 331–332 (TA), Met-382, and Gly-411.

In the N-terminal section; belongs to the precorrin-2 dehydrogenase / sirohydrochlorin ferrochelatase family. The protein in the C-terminal section; belongs to the precorrin methyltransferase family.

The catalysed reaction is uroporphyrinogen III + 2 S-adenosyl-L-methionine = precorrin-2 + 2 S-adenosyl-L-homocysteine + H(+). The enzyme catalyses precorrin-2 + NAD(+) = sirohydrochlorin + NADH + 2 H(+). It carries out the reaction siroheme + 2 H(+) = sirohydrochlorin + Fe(2+). It participates in cofactor biosynthesis; adenosylcobalamin biosynthesis; precorrin-2 from uroporphyrinogen III: step 1/1. Its pathway is cofactor biosynthesis; adenosylcobalamin biosynthesis; sirohydrochlorin from precorrin-2: step 1/1. It functions in the pathway porphyrin-containing compound metabolism; siroheme biosynthesis; precorrin-2 from uroporphyrinogen III: step 1/1. The protein operates within porphyrin-containing compound metabolism; siroheme biosynthesis; siroheme from sirohydrochlorin: step 1/1. It participates in porphyrin-containing compound metabolism; siroheme biosynthesis; sirohydrochlorin from precorrin-2: step 1/1. Functionally, multifunctional enzyme that catalyzes the SAM-dependent methylations of uroporphyrinogen III at position C-2 and C-7 to form precorrin-2 via precorrin-1. Then it catalyzes the NAD-dependent ring dehydrogenation of precorrin-2 to yield sirohydrochlorin. Finally, it catalyzes the ferrochelation of sirohydrochlorin to yield siroheme. The chain is Siroheme synthase 2 from Yersinia pseudotuberculosis serotype O:1b (strain IP 31758).